We begin with the raw amino-acid sequence, 691 residues long: Putative calcium up-regulated protein I (691 aa).

The region spanning 47–174 (SNCYLKEKPQ…NYTSQIWTYN (128 aa)) is the Ricin B-type lectin domain.

The protein belongs to the cup family.

The sequence is that of Putative calcium up-regulated protein I (cupI) from Dictyostelium discoideum (Social amoeba).